Reading from the N-terminus, the 258-residue chain is MNINEFPQQVNQVISIAETILQGQILGIYLYGSATMNGLRPDSDIDILIITKQELSNSIRADLTKQLLKISGSVGCIEKRPLEVTIINQSDIVPLQFPPKCQYMYGEWLRGEMEAGEYPQACNDPDIMILLWQARKNSITLKGAESKELIPAIPFHEIKKAIRFSLPGLISSFKGDERNVLLTLSRMWFTLVTEEITTKDVAAKWVILKLPERFPPLLTTAKEAYLGNLSDEWETVEKEAMALVEYMKKQIEELLRTE.

It catalyses the reaction spectinomycin + ATP = 9-O-adenylylspectinomycin + diphosphate. Functionally, mediates bacterial resistance to spectinomycin, is probably a spectinomycin 9-adenylyltransferase. This chain is Spectinomycin 9-adenylyltransferase, found in Campylobacter jejuni.